We begin with the raw amino-acid sequence, 216 residues long: Uracil phosphoribosyltransferase (216 aa).

5-phospho-alpha-D-ribose 1-diphosphate-binding positions include Arg85, Arg110, and 135–143 (DPMVATGYS). Uracil is bound by residues Ile200 and 205 to 207 (GDA). Position 206 (Asp206) interacts with 5-phospho-alpha-D-ribose 1-diphosphate.

The protein belongs to the UPRTase family. Mg(2+) is required as a cofactor.

The catalysed reaction is UMP + diphosphate = 5-phospho-alpha-D-ribose 1-diphosphate + uracil. It participates in pyrimidine metabolism; UMP biosynthesis via salvage pathway; UMP from uracil: step 1/1. Allosterically activated by GTP. In terms of biological role, catalyzes the conversion of uracil and 5-phospho-alpha-D-ribose 1-diphosphate (PRPP) to UMP and diphosphate. This Paraburkholderia xenovorans (strain LB400) protein is Uracil phosphoribosyltransferase.